The chain runs to 144 residues: Cell division protein SepF (144 aa).

The tract at residues 16–42 is disordered; that stretch reads DEMNEAPYTEAEQQEEEVPQAQKNERR.

The protein belongs to the SepF family. As to quaternary structure, homodimer. Interacts with FtsZ.

It localises to the cytoplasm. In terms of biological role, cell division protein that is part of the divisome complex and is recruited early to the Z-ring. Probably stimulates Z-ring formation, perhaps through the cross-linking of FtsZ protofilaments. Its function overlaps with FtsA. This is Cell division protein SepF from Lactobacillus gasseri (strain ATCC 33323 / DSM 20243 / BCRC 14619 / CIP 102991 / JCM 1131 / KCTC 3163 / NCIMB 11718 / NCTC 13722 / AM63).